The primary structure comprises 223 residues: Thymidine kinase (223 aa).

ATP contacts are provided by residues 19 to 26 and 96 to 99; these read GPMFAGKT and DEVQ. Glu97 (proton acceptor) is an active-site residue. Residues Cys153, Cys156, Cys191, and His194 each coordinate Zn(2+).

It belongs to the thymidine kinase family. As to quaternary structure, homotetramer.

It is found in the cytoplasm. It carries out the reaction thymidine + ATP = dTMP + ADP + H(+). This Ureaplasma urealyticum serovar 10 (strain ATCC 33699 / Western) protein is Thymidine kinase.